Reading from the N-terminus, the 364-residue chain is Phosphate acyltransferase (364 aa).

Residues 343-364 (IRTSGRSGGKSKSSAAREDGAA) form a disordered region.

Belongs to the PlsX family. As to quaternary structure, homodimer. Probably interacts with PlsY.

The protein localises to the cytoplasm. The enzyme catalyses a fatty acyl-[ACP] + phosphate = an acyl phosphate + holo-[ACP]. It functions in the pathway lipid metabolism; phospholipid metabolism. Functionally, catalyzes the reversible formation of acyl-phosphate (acyl-PO(4)) from acyl-[acyl-carrier-protein] (acyl-ACP). This enzyme utilizes acyl-ACP as fatty acyl donor, but not acyl-CoA. The protein is Phosphate acyltransferase of Novosphingobium aromaticivorans (strain ATCC 700278 / DSM 12444 / CCUG 56034 / CIP 105152 / NBRC 16084 / F199).